We begin with the raw amino-acid sequence, 397 residues long: Lysophospholipid transporter LplT (397 aa).

The Periplasmic portion of the chain corresponds to 1–17; that stretch reads MSESVHTNTSLWSKGMK. The helical transmembrane segment at 18-38 threads the bilayer; the sequence is AVIVAQFLSAFGDNALLFATL. Over 39-52 the chain is Cytoplasmic; the sequence is ALLKAQFYPEWSQP. A helical transmembrane segment spans residues 53–73; sequence ILQMVFVGAYILFAPFVGQVA. Residues 74–90 lie on the Periplasmic side of the membrane; the sequence is DSFAKGRVMMFANGLKL. Residues 91–111 form a helical membrane-spanning segment; it reads LGAASICFGINPFLGYTLVGV. The Cytoplasmic portion of the chain corresponds to 112-144; it reads GAAAYSPAKYGILGELTTGSKLVKANGLMEAST. The chain crosses the membrane as a helical span at residues 145–165; that stretch reads IAAILLGSVAGGVLADWHILV. Position 166 (alanine 166) is a topological domain, periplasmic. The helical transmembrane segment at 167–187 threads the bilayer; sequence LVACALAYGGAVVANIYIPKL. Residues 188 to 226 lie on the Cytoplasmic side of the membrane; it reads AAARPGQSWNLISMTRSFLNACTSLWRNGETRFSLVGTS. Residues 227-247 form a helical membrane-spanning segment; the sequence is LFWGAGVTLRFLLVLWVPVAL. At 248–256 the chain is on the periplasmic side; the sequence is GITDNATPT. A helical membrane pass occupies residues 257–277; sequence YLNAMVAIGIVVGAGAAAKLV. Residues 278–280 lie on the Cytoplasmic side of the membrane; it reads TLE. A helical transmembrane segment spans residues 281 to 301; that stretch reads TVSRCMPAGILIGVVVLIFSL. The Periplasmic segment spans residues 302–304; it reads QHE. Residues 305 to 325 traverse the membrane as a helical segment; sequence LLPAYALLMLIGVLGGFFVVP. At 326 to 343 the chain is on the cytoplasmic side; sequence LNALLQERGKKSVGAGNA. The helical transmembrane segment at 344–364 threads the bilayer; it reads IAVQNLGENSAMLLMLGIYSL. At 365–366 the chain is on the periplasmic side; it reads AV. Residues 367 to 387 traverse the membrane as a helical segment; that stretch reads MVGIPVVPIGIGFGALFALAI. The Cytoplasmic portion of the chain corresponds to 388–397; it reads TALWIWQRRH.

It belongs to the major facilitator superfamily. LplT (TC 2.A.1.42) family.

The protein resides in the cell inner membrane. Catalyzes the facilitated diffusion of 2-acyl-glycero-3-phosphoethanolamine (2-acyl-GPE) into the cell. This is Lysophospholipid transporter LplT from Escherichia coli O81 (strain ED1a).